A 232-amino-acid polypeptide reads, in one-letter code: MKIGIIGAMEEEVTLLRDKIENRQTISLGGCEIYTGQLNGTEVALLKSGIGKVAAALGATLLLEHCKPDVIINTGSAGGLAPTLKVGDIVVSDEARYHDADVTAFGYEYGQLPGCPAGFKADDKLIAAAEACIAELNLNAVRGLIVSGDAFINGSVGLAKIRHNFPQAIAVEMEATAIAHVCHNFNVPFVVVRAISDVADQQSHLSFDEFLAVAAKQSSLMVESLVQKLAHG.

Glu-12 (proton acceptor) is an active-site residue. Substrate is bound by residues Gly-78, Ile-152, and 173–174; that span reads ME. Residue Asp-197 is the Proton donor of the active site.

It belongs to the PNP/UDP phosphorylase family. MtnN subfamily. Homodimer.

The enzyme catalyses S-adenosyl-L-homocysteine + H2O = S-(5-deoxy-D-ribos-5-yl)-L-homocysteine + adenine. The catalysed reaction is S-methyl-5'-thioadenosine + H2O = 5-(methylsulfanyl)-D-ribose + adenine. It catalyses the reaction 5'-deoxyadenosine + H2O = 5-deoxy-D-ribose + adenine. It participates in amino-acid biosynthesis; L-methionine biosynthesis via salvage pathway; S-methyl-5-thio-alpha-D-ribose 1-phosphate from S-methyl-5'-thioadenosine (hydrolase route): step 1/2. In terms of biological role, catalyzes the irreversible cleavage of the glycosidic bond in both 5'-methylthioadenosine (MTA) and S-adenosylhomocysteine (SAH/AdoHcy) to adenine and the corresponding thioribose, 5'-methylthioribose and S-ribosylhomocysteine, respectively. Also cleaves 5'-deoxyadenosine, a toxic by-product of radical S-adenosylmethionine (SAM) enzymes, into 5-deoxyribose and adenine. Thus, is required for in vivo function of the radical SAM enzymes biotin synthase and lipoic acid synthase, that are inhibited by 5'-deoxyadenosine accumulation. This chain is 5'-methylthioadenosine/S-adenosylhomocysteine nucleosidase, found in Escherichia coli O7:K1 (strain IAI39 / ExPEC).